The primary structure comprises 319 residues: Ribosomal large subunit pseudouridine synthase C (319 aa).

The S4 RNA-binding domain maps to Q20–P83. D144 is a catalytic residue.

It belongs to the pseudouridine synthase RluA family.

It catalyses the reaction uridine(955/2504/2580) in 23S rRNA = pseudouridine(955/2504/2580) in 23S rRNA. Responsible for synthesis of pseudouridine from uracil at positions 955, 2504 and 2580 in 23S ribosomal RNA. The chain is Ribosomal large subunit pseudouridine synthase C from Escherichia coli (strain K12).